The primary structure comprises 186 residues: MLLYICLVNLLLPLSVGAASGAALGVIAKVGVDAALQQIDDVWKGKTVRYWKCAVENRSSKTLYALGTTQESGSMTTVFADIPPKSTGVFVWEKSRGAAKGAVGVVHYKYGNKVLNIMASIPYDWNLYKAWANVHLSDHKESFSDLYKGKNGAKYPTRAGNWGEVDGTKFFLTEKSHAEFKVIFSG.

A signal peptide spans 1–18; sequence MLLYICLVNLLLPLSVGA. The N-terminal region stretch occupies residues 29-48; it reads KVGVDAALQQIDDVWKGKTV. The Cell attachment site, crucial for protein stability signature appears at 158–160; it reads RAG.

Belongs to the actinoporin family. HALT subfamily. In terms of assembly, octamer or nonamer in membranes. Monomer in the soluble state. In vitro, interacts with folate receptor alpha (of target organism). As to expression, expressed female germline during oogenesis.

Its subcellular location is the nematocyst. The protein resides in the secreted. It is found in the target cell membrane. Functionally, pore-forming protein that forms hydrophilic pores and causes cytolysis. Compared to equinatoxin-2 (AC P61914), it reveals lower cytolysis activity (5-12-fold difference, tested on erythrocytes), a larger pore size (probably 2-3 nm) and different affinity to membrane lipids (100-fold lower affinity to sphingomyelin). Binds to sulfatides (SFT) as well as to the two sphingolipids, lysophosphatidic acid (LPA) and sphingosine-1-phosphate (S1P). It seems to bind more strongly to LPA than to S1P and SFT. Shows cytolytic activity on HeLa cells, with a different potency than its paralogs (from most potent to less potent: HALT-4&gt;HALT-6~HALT-1&gt;HALT-3&gt;HALT-7&gt;HALT-2). Pore formation is a multi-step process that involves specific recognition of membrane lipid by a protein aromatic residues rich region, firm binding to the membrane (mainly driven by hydrophobic interactions) accompanied by the transfer of the N-terminal region to the lipid-water interface and finally pore formation after oligomerization of monomers. In vitro, binds to the folate receptor alpha (FOLR1), a GPI-anchored membrane protein that plays a major role in the uptake of folate/folic acid into cells via endocytosis, suggesting a possible involvement of this receptor in the mechanism of HALT-1-induced cell lysis. In vivo, does not cause visible paralysis in larvae of the blowfly Sarcophaga faculata, the most common arthropod prey of Hydra. In Hydra vulgaris (Hydra), this protein is Hydra actinoporin-like toxin 1.